The following is a 186-amino-acid chain: UPF0149 protein Pfl01_5435 (186 aa).

Belongs to the UPF0149 family.

The sequence is that of UPF0149 protein Pfl01_5435 from Pseudomonas fluorescens (strain Pf0-1).